Consider the following 344-residue polypeptide: Holliday junction branch migration complex subunit RuvB (344 aa).

Residues 1-183 (MPDRELISGD…FGLVLRLDPY (183 aa)) form a large ATPase domain (RuvB-L) region. Residues Leu22, Arg23, Gly64, Lys67, Thr68, Thr69, 130 to 132 (EDF), Arg173, Tyr183, and Arg220 contribute to the ATP site. Residue Thr68 participates in Mg(2+) binding. Positions 184 to 254 (NTEELKAIVK…VAQTALNLLD (71 aa)) are small ATPAse domain (RuvB-S). The segment at 257 to 344 (RYGLDEIDQK…EGDHPSLFEA (88 aa)) is head domain (RuvB-H). DNA is bound by residues Arg312 and Arg317.

The protein belongs to the RuvB family. In terms of assembly, homohexamer. Forms an RuvA(8)-RuvB(12)-Holliday junction (HJ) complex. HJ DNA is sandwiched between 2 RuvA tetramers; dsDNA enters through RuvA and exits via RuvB. An RuvB hexamer assembles on each DNA strand where it exits the tetramer. Each RuvB hexamer is contacted by two RuvA subunits (via domain III) on 2 adjacent RuvB subunits; this complex drives branch migration. In the full resolvosome a probable DNA-RuvA(4)-RuvB(12)-RuvC(2) complex forms which resolves the HJ.

It is found in the cytoplasm. It carries out the reaction ATP + H2O = ADP + phosphate + H(+). Its function is as follows. The RuvA-RuvB-RuvC complex processes Holliday junction (HJ) DNA during genetic recombination and DNA repair, while the RuvA-RuvB complex plays an important role in the rescue of blocked DNA replication forks via replication fork reversal (RFR). RuvA specifically binds to HJ cruciform DNA, conferring on it an open structure. The RuvB hexamer acts as an ATP-dependent pump, pulling dsDNA into and through the RuvAB complex. RuvB forms 2 homohexamers on either side of HJ DNA bound by 1 or 2 RuvA tetramers; 4 subunits per hexamer contact DNA at a time. Coordinated motions by a converter formed by DNA-disengaged RuvB subunits stimulates ATP hydrolysis and nucleotide exchange. Immobilization of the converter enables RuvB to convert the ATP-contained energy into a lever motion, pulling 2 nucleotides of DNA out of the RuvA tetramer per ATP hydrolyzed, thus driving DNA branch migration. The RuvB motors rotate together with the DNA substrate, which together with the progressing nucleotide cycle form the mechanistic basis for DNA recombination by continuous HJ branch migration. Branch migration allows RuvC to scan DNA until it finds its consensus sequence, where it cleaves and resolves cruciform DNA. This Solibacter usitatus (strain Ellin6076) protein is Holliday junction branch migration complex subunit RuvB.